The following is an 803-amino-acid chain: Bromodomain-containing protein 2 (803 aa).

Met1 carries the post-translational modification N-acetylmethionine. Residues 1-28 are disordered; it reads MLQNVTPHSKLPGEGNAGLLGLGPEAAA. Residue Thr6 is modified to Phosphothreonine. At Ser37 the chain carries Phosphoserine. Residues 53–73 are disordered; sequence ALQLTPANPPPPEVSNPKKPG. Positions 74-180 constitute a Bromo 1 domain; the sequence is RVTNQLQYLH…KIFLQKVASM (107 aa). 6 residues coordinate a protein: Asp112, Tyr155, Asn156, Lys157, Asp160, and Asp161. Disordered regions lie at residues 268 to 349, 456 to 653, and 739 to 803; these read PPAQ…LSEQ, EPLE…RQLS, and EKRL…SDSG. Residues 285-298 show a composition bias toward low complexity; it reads TTTPTPTAILAPGS. 3 positions are modified to phosphoserine: Ser298, Ser301, and Ser305. Basic and acidic residues predominate over residues 316–332; sequence MRRESGRPIKPPRKDLP. In terms of domain architecture, Bromo 2 spans 344–453; the sequence is GKLSEQLKHC…DVFEFRYAKM (110 aa). The span at 481 to 515 shows a compositional bias: acidic residues; the sequence is SSEESSSESSSEEDEEEDEEEEEEEEESESSDSEE. Residues 545-567 are compositionally biased toward basic residues; that stretch reads KPKRKREKKEKKKKRKAEKHRGR. A Nuclear localization signal motif is present at residues 556-560; the sequence is KKKRK. An NET domain is found at 634-716; that stretch reads DSEEEEESRP…SCLRKKPRKP (83 aa). The residue at position 635 (Ser635) is a Phosphoserine. Positions 641 to 652 are enriched in basic and acidic residues; sequence SRPMSYDEKRQL. The segment covering 777–797 has biased composition (low complexity); that stretch reads SASSSSSDSSSSSSSSSSSDT.

It belongs to the BET family. As to quaternary structure, homodimer. Interacts with E2F1. Interacts with (acetylated) STAT3; promoting STAT3 recruitment to chromatin. Interacts with CTCF; promoting BRD2 recruitment to chromatin.

It localises to the nucleus. It is found in the chromosome. In terms of biological role, chromatin reader protein that specifically recognizes and binds histone H4 acetylated at 'Lys-5' and 'Lys-12' (H4K5ac and H4K12ac, respectively), thereby controlling gene expression and remodeling chromatin structures. Recruits transcription factors and coactivators to target gene sites, and activates RNA polymerase II machinery for transcriptional elongation. Plays a key role in genome compartmentalization via its association with CTCF and cohesin: recruited to chromatin by CTCF and promotes formation of topologically associating domains (TADs) via its ability to bind acetylated histones, contributing to CTCF boundary formation and enhancer insulation. Also recognizes and binds acetylated non-histone proteins, such as STAT3. Involved in inflammatory response by regulating differentiation of naive CD4(+) T-cells into T-helper Th17: recognizes and binds STAT3 acetylated at 'Lys-87', promoting STAT3 recruitment to chromatin. In addition to acetylated lysines, also recognizes and binds lysine residues on histones that are both methylated and acetylated on the same side chain to form N6-acetyl-N6-methyllysine (Kacme), an epigenetic mark of active chromatin associated with increased transcriptional initiation. Specifically binds histone H4 acetyl-methylated at 'Lys-5' and 'Lys-12' (H4K5acme and H4K12acme, respectively). The protein is Bromodomain-containing protein 2 (BRD2) of Canis lupus familiaris (Dog).